A 274-amino-acid polypeptide reads, in one-letter code: 4-diphosphocytidyl-2-C-methyl-D-erythritol kinase (274 aa).

The active site involves K9. 91-101 (PAGAGLGGGSS) provides a ligand contact to ATP. D133 is a catalytic residue.

This sequence belongs to the GHMP kinase family. IspE subfamily.

It carries out the reaction 4-CDP-2-C-methyl-D-erythritol + ATP = 4-CDP-2-C-methyl-D-erythritol 2-phosphate + ADP + H(+). Its pathway is isoprenoid biosynthesis; isopentenyl diphosphate biosynthesis via DXP pathway; isopentenyl diphosphate from 1-deoxy-D-xylulose 5-phosphate: step 3/6. Functionally, catalyzes the phosphorylation of the position 2 hydroxy group of 4-diphosphocytidyl-2C-methyl-D-erythritol. The sequence is that of 4-diphosphocytidyl-2-C-methyl-D-erythritol kinase from Persephonella marina (strain DSM 14350 / EX-H1).